The primary structure comprises 156 residues: Small ribosomal subunit protein uS7 (156 aa).

This sequence belongs to the universal ribosomal protein uS7 family. As to quaternary structure, part of the 30S ribosomal subunit. Contacts proteins S9 and S11.

Functionally, one of the primary rRNA binding proteins, it binds directly to 16S rRNA where it nucleates assembly of the head domain of the 30S subunit. Is located at the subunit interface close to the decoding center, probably blocks exit of the E-site tRNA. This is Small ribosomal subunit protein uS7 from Shewanella loihica (strain ATCC BAA-1088 / PV-4).